Reading from the N-terminus, the 445-residue chain is Glutamate--tRNA ligase 1 (445 aa).

Positions 8–18 (PSPTGKLHVGN) match the 'HIGH' region motif. The short motif at 239–243 (KLSKR) is the 'KMSKS' region element. An ATP-binding site is contributed by K242.

The protein belongs to the class-I aminoacyl-tRNA synthetase family. Glutamate--tRNA ligase type 1 subfamily. Monomer.

It localises to the cytoplasm. The catalysed reaction is tRNA(Glu) + L-glutamate + ATP = L-glutamyl-tRNA(Glu) + AMP + diphosphate. Catalyzes the attachment of glutamate to tRNA(Glu) in a two-step reaction: glutamate is first activated by ATP to form Glu-AMP and then transferred to the acceptor end of tRNA(Glu). This Maricaulis maris (strain MCS10) (Caulobacter maris) protein is Glutamate--tRNA ligase 1.